The primary structure comprises 361 residues: Chorismate synthase (361 aa).

Residue Arg-47 coordinates NADP(+). FMN contacts are provided by residues 124 to 126 (RAS), Gly-286, 301 to 305 (KPTAT), and Arg-327.

The protein belongs to the chorismate synthase family. In terms of assembly, homotetramer. FMNH2 serves as cofactor.

The enzyme catalyses 5-O-(1-carboxyvinyl)-3-phosphoshikimate = chorismate + phosphate. It functions in the pathway metabolic intermediate biosynthesis; chorismate biosynthesis; chorismate from D-erythrose 4-phosphate and phosphoenolpyruvate: step 7/7. Functionally, catalyzes the anti-1,4-elimination of the C-3 phosphate and the C-6 proR hydrogen from 5-enolpyruvylshikimate-3-phosphate (EPSP) to yield chorismate, which is the branch point compound that serves as the starting substrate for the three terminal pathways of aromatic amino acid biosynthesis. This reaction introduces a second double bond into the aromatic ring system. The chain is Chorismate synthase from Prochlorococcus marinus (strain NATL2A).